We begin with the raw amino-acid sequence, 104 residues long: L-rhamnose mutarotase (104 aa).

Y18 contacts substrate. The active-site Proton donor is H22. Substrate is bound by residues Y41 and 76 to 77 (WW). The disordered stretch occupies residues 85 to 104 (PSNPDNSPISDALDPVFYLD).

The protein belongs to the rhamnose mutarotase family. In terms of assembly, homodimer.

Its subcellular location is the cytoplasm. It carries out the reaction alpha-L-rhamnose = beta-L-rhamnose. It participates in carbohydrate metabolism; L-rhamnose metabolism. In terms of biological role, involved in the anomeric conversion of L-rhamnose. This is L-rhamnose mutarotase from Pectobacterium atrosepticum (strain SCRI 1043 / ATCC BAA-672) (Erwinia carotovora subsp. atroseptica).